Consider the following 248-residue polypeptide: Putative TrmH family tRNA/rRNA methyltransferase (248 aa).

3 residues coordinate S-adenosyl-L-methionine: glycine 196, isoleucine 216, and leucine 225.

It belongs to the class IV-like SAM-binding methyltransferase superfamily. RNA methyltransferase TrmH family.

The protein is Putative TrmH family tRNA/rRNA methyltransferase of Staphylococcus aureus (strain Mu50 / ATCC 700699).